The chain runs to 293 residues: sn-glycerol-3-phosphate transport system permease protein UgpA (293 aa).

The next 6 membrane-spanning stretches (helical) occupy residues 10-30, 72-92, 108-128, 156-176, 204-224, and 261-281; these read ILPY…FFWP, VTVI…LLLA, MMIM…LFMF, MLLV…LFFV, IVFP…TVYA, and LGSS…LTAF. One can recognise an ABC transmembrane type-1 domain in the interval 66-282; that stretch reads YLNSLKVTVI…VIVIALTAFQ (217 aa).

This sequence belongs to the binding-protein-dependent transport system permease family. The complex is composed of two ATP-binding proteins (UgpC), two transmembrane proteins (UgpA and UgpE) and a solute-binding protein (UgpB).

Its subcellular location is the cell inner membrane. Its function is as follows. Part of the ABC transporter complex UgpBAEC involved in sn-glycerol-3-phosphate (G3P) import. Probably responsible for the translocation of the substrate across the membrane. The sequence is that of sn-glycerol-3-phosphate transport system permease protein UgpA (ugpA) from Agrobacterium fabrum (strain C58 / ATCC 33970) (Agrobacterium tumefaciens (strain C58)).